The chain runs to 314 residues: Deacetoxycephalosporin C synthase (314 aa).

The region spanning 156-269 (DCEPLLRLRY…RTSSVFFLRP (114 aa)) is the Fe2OG dioxygenase domain.

It belongs to the iron/ascorbate-dependent oxidoreductase family. It depends on Fe cation as a cofactor. Requires L-ascorbate as cofactor.

The catalysed reaction is penicillin N + 2-oxoglutarate + O2 = deacetoxycephalosporin C + succinate + CO2 + H2O. It participates in antibiotic biosynthesis; cephalosporin C biosynthesis. Its function is as follows. Catalyzes the step from penicillin N to deacetoxy-cephalosporin C. In Amycolatopsis lactamdurans (Nocardia lactamdurans), this protein is Deacetoxycephalosporin C synthase (cefE).